The sequence spans 318 residues: Deacetoxycephalosporin C hydroxylase (318 aa).

In terms of domain architecture, Fe2OG dioxygenase spans 158-271; sequence DADPVLRLRY…RTSSVFFLRP (114 aa).

Belongs to the iron/ascorbate-dependent oxidoreductase family. As to quaternary structure, monomer. Fe cation is required as a cofactor.

It catalyses the reaction deacetoxycephalosporin C + 2-oxoglutarate + O2 = deacetylcephalosporin C + succinate + CO2. Its pathway is antibiotic biosynthesis; cephalosporin C biosynthesis. Functionally, hydroxylation of desacetoxicephalosporin C in 3'position to form deacetylcephalosporin C. This is Deacetoxycephalosporin C hydroxylase (cefF) from Streptomyces clavuligerus.